We begin with the raw amino-acid sequence, 1193 residues long: MERHQPRLHHPAQGSAAGTPYPSSASLRGCRESKMPRRKGPQHPPPPSGPEEPGEKRPKFHLNIRTLTDDMLDKFASIRIPGSKKERPPLPNLKTAFASSDCSAAPLEMMENFPKPLSENELLELFEKMMEDMNLNEDKKAPLREKDFSIKKEMVMQYINTASKTGSLKRSRQISPQEFIHELKMGSADERLVTCLESLRVSLTSNPVSWVESFGHEGLGLLLDILEKLISGKIQEKVVKKNQHKVIQCLKALMNTQYGLERIMSEERSLSLLAKAVDPRHPNMMTDVVKLLSAVCIVGEESILEEVLEALTSAGEEKKIDRFFCIVEGLRHNSVQLQVACMQLINALVTSPDDLDFRLHIRNEFMRCGLKEILPNLKCIKNDGLDIQLKVFDEHKEEDLFELSHRLEDIRAELDEAYDVYNMVWSTVKETRAEGYFISILQHLLLIRNDYFIRQQYFKLIDECVSQIVLHRDGMDPDFTYRKRLDLDLTQFVDICIDQAKLEEFEEKASELYKKFEKEFTDHQETQAELQKKEAKINELQAELQAFKSQFGALPADCNIPLPPSKEGGTGHSALPPPPPLPSGGGVPPPPPPPPPPPLPGMRMPFSGPVPPPPPLGFLGGQNSPPLPILPFGLKPKKEFKPEISMRRLNWLKIRPHEMTENCFWIKVNENKYENVDLLCKLENTFCCQQKERREEEDIEEKKSIKKKIKELKFLDSKIAQNLSIFLSSFRVPYEEIRMMILEVDETRLAESMIQNLIKHLPDQEQLNSLSQFKSEYSNLCEPEQFVVVMSNVKRLRPRLSAILFKLQFEEQVNNIKPDIMAVSTACEEIKKSKSFSKLLELVLLMGNYMNAGSRNAQTFGFNLSSLCKLKDTKSADQKTTLLHFLVEICEEKYPDILNFVDDLEPLDKASKVSVETLEKNLRQMGRQLQQLEKELETFPPPEDLHDKFVTKMSRFVISAKEQYETLSKLHENMEKLYQSIIGYYAIDVKKVSVEDFLTDLNNFRTTFMQAIKENIKKREAEEKEKRVRIAKELAERERLERQQKKKRLLEMKTEGDETGVMDNLLEALQSGAAFRDRRKRTPMPKDVRQSLSPMSQRPVLKVCNHENQKVQLTEGSRSHYNINCNSTRTPVAKELNYNLDTHTSTGRIKAAEKKEACNVESNRKKETELLGSFSKNESVPEVEALLARLRAL.

The segment covering 1-10 (MERHQPRLHH) has biased composition (basic residues). Residues 1–57 (MERHQPRLHHPAQGSAAGTPYPSSASLRGCRESKMPRRKGPQHPPPPSGPEEPGEKR) form a disordered region. Ser26 carries the post-translational modification Phosphoserine. The short motif at 36–60 (PRRKGPQHPPPPSGPEEPGEKRPKF) is the Nuclear localization signal element. Phosphothreonine is present on Thr68. A phosphoserine mark is found at Ser77 and Ser175. The region spanning 114 to 476 (PKPLSENELL…QIVLHRDGMD (363 aa)) is the GBD/FH3 domain. Positions 497-554 (IDQAKLEEFEEKASELYKKFEKEFTDHQETQAELQKKEAKINELQAELQAFKSQFGAL) form a coiled coil. The tract at residues 558–622 (CNIPLPPSKE…PPPLGFLGGQ (65 aa)) is disordered. Positions 561–631 (PLPPSKEGGT…QNSPPLPILP (71 aa)) constitute an FH1 domain. Pro residues predominate over residues 575–600 (LPPPPPLPSGGGVPPPPPPPPPPPLP). Position 624 is a phosphoserine (Ser624). The FH2 domain maps to 636-1034 (PKKEFKPEIS…EKRVRIAKEL (399 aa)). The stretch at 1013–1056 (KENIKKREAEEKEKRVRIAKELAERERLERQQKKKRLLEMKTEG) forms a coiled coil. Positions 1057-1087 (DETGVMDNLLEALQSGAAFRDRRKRTPMPKD) constitute a DAD domain. Phosphoserine occurs at positions 1093 and 1179. Residues 1184-1193 (EALLARLRAL) carry the Nuclear export signal motif.

Belongs to the formin homology family. Diaphanous subfamily. In terms of processing, ubiquitinated.

The protein localises to the cytoplasm. It localises to the nucleus. Actin nucleation and elongation factor required for the assembly of F-actin structures, such as actin cables and stress fibers. Required for cytokinesis, stress fiber formation and transcriptional activation of the serum response factor. Binds to GTP-bound form of Rho and to profilin: acts in a Rho-dependent manner to recruit profilin to the membrane, where it promotes actin polymerization. DFR proteins couple Rho and Src tyrosine kinase during signaling and the regulation of actin dynamics. Also acts as an actin nucleation and elongation factor in the nucleus by promoting nuclear actin polymerization inside the nucleus to drive serum-dependent SRF-MRTFA activity. This Homo sapiens (Human) protein is Protein diaphanous homolog 3 (DIAPH3).